The chain runs to 803 residues: MMKSLFYHFIGIGGIGMSALAHVLLDRGYSVSGSDLSEGKVVEKLKNKGAEFFLGNQEEHIPEGAVVVYSSSISKKNPEFLSAKSRGNRVVHRAELLAELAQDQISIFVTGSHGKTTVSSLITAILQEAKKNPSFAIGGLNQEGINGGSGSEYFVAEADESDGSIRCYTPEFSVITNIDDEHLSNFEGDRELLLASLKDFALKTQQICWYNGDCPRLRSCLQGHTFGLDSSCDLHILSYYQEGWRLYFTAKYQDVVYADIEVQLVGMHNVLNAAAAMGIALSLGIDEGAIRNAFRGFSGVQRRLQRKNSSETFLFLEDYAHHPSEISCTLRAVRTAVGQRRILAIYQPHRFSRLRECIDSFPSAFKDADEVLLTEVYSAGEEAEDISYQKLAEAISQESIVKCTHIPFHELQRHLEQSIRVHDVCVSLGAGNIVNLGEKLRDFEPQKLHLGIICGGKSCEHEISVLSAKNIAKHLSKSFYDVSYFLITREGLWESVSSLETAEDSGKSVFDPEIAQRLEKVDVVLPILHGPYGEDGAMQGFLETIGKPYTGPAIAFSAIAMNKVFTKRFMSDLGIPVVPYLPLTLAGWKQEQDKWLAHIVEAFSFPIFVKSSHLGSSIGVFEVHNVIELRDAINEAFMRDNDVFVEENRLGCKEIEVSVLGDGSGAFVVAGLHERRGSGGFIDYQEKYGLSGKSSAQIVFDTDLSKEIQEQILEAADKIYRLLLGKGSCRIDFFVDEEGNFWLSEMNPIPGMTETSPFLTSFIRKGWSYEQIVHQLVIDGLQRFNQRQRLISTSFVDQAFAIQ.

A UDP-N-acetylmuramate--alanine ligase region spans residues 1–446; the sequence is MMKSLFYHFI…GEKLRDFEPQ (446 aa). ATP-binding positions include 111–117 and 600–655; these read GSHGKTT and VEAF…CKEI. Residues 447–803 form a D-alanine--D-alanine ligase region; it reads KLHLGIICGG…SFVDQAFAIQ (357 aa). Positions 567–778 constitute an ATP-grasp domain; it reads KRFMSDLGIP…YEQIVHQLVI (212 aa). Residues aspartate 732, glutamate 745, and asparagine 747 each contribute to the Mg(2+) site.

This sequence in the N-terminal section; belongs to the MurCDEF family. The protein in the C-terminal section; belongs to the D-alanine--D-alanine ligase family. It depends on Mg(2+) as a cofactor. Mn(2+) serves as cofactor.

The protein resides in the cytoplasm. It carries out the reaction UDP-N-acetyl-alpha-D-muramate + L-alanine + ATP = UDP-N-acetyl-alpha-D-muramoyl-L-alanine + ADP + phosphate + H(+). The enzyme catalyses 2 D-alanine + ATP = D-alanyl-D-alanine + ADP + phosphate + H(+). The protein operates within cell wall biogenesis; peptidoglycan biosynthesis. Its function is as follows. Cell wall formation. This Chlamydia trachomatis serovar D (strain ATCC VR-885 / DSM 19411 / UW-3/Cx) protein is Bifunctional enzyme MurC/Ddl (murC/ddl).